A 37-amino-acid polypeptide reads, in one-letter code: Palicourein (37 aa).

Residues 1–37 constitute a cross-link (cyclopeptide (Gly-Asn)); that stretch reads GDPTFCGETCRVIPVCTYSAALGCTCDDRSDGLCKRN. 3 disulfide bridges follow: Cys-6–Cys-24, Cys-10–Cys-26, and Cys-16–Cys-34.

It belongs to the cyclotide family. Post-translationally, this is a cyclic peptide.

Its function is as follows. Probably participates in a plant defense mechanism. Inhibits the cytopathic effects of the human immunodeficiency virus. This Palicourea condensata (Cappel) protein is Palicourein.